The sequence spans 346 residues: 26S proteasome non-ATPase regulatory subunit 4 (346 aa).

Residues 5-190 (STMICVDNSE…LTDALLQSSV (186 aa)) form the VWFA domain. UIM domains are found at residues 216-235 (ENDPDLALALRVSMEEERAR) and 273-292 (TEEQQLEWALRLSMQENAPA). The interval 290–346 (APAEQPQVQHEQMDVDGAPAVGGDNLDDLMNNPELLQQIVDDLPAANAEKDDDKEKK) is disordered. The segment covering 337–346 (AEKDDDKEKK) has biased composition (basic and acidic residues).

This sequence belongs to the proteasome subunit S5A family. As to quaternary structure, the 26S proteasome is composed of a core protease, known as the 20S proteasome, capped at one or both ends by the 19S regulatory complex (RC). The RC is composed of at least 18 different subunits in two subcomplexes, the base and the lid, which form the portions proximal and distal to the 20S proteolytic core, respectively. As to expression, broadly expressed with high expression in the pharynx, intestine, hypodermis and spermatheca and weak expression in the excretory cell, body wall muscle, vulva and somatic gonad.

The protein localises to the cytoplasm. It is found in the nucleus. Binds and presumably selects ubiquitin-conjugates for destruction. Required for protein degradation and ubiquitin-proteasome system (UBS) function and regulates proteasomal subunit expression. Involvement in UBS might be cell type specific. Regulator of the autophagy-lysosome pathway that may confer resistance to autophagy by regulating the expression of autophagy-related proteins such as lgg-1, and by regulating lysosome formation, possibly by modulating elt-2 activity. Required for fertility, sperm production, and sex determination through regulation of tra-2 protein. Plays a role in the elimination of paternal mitochondria in fertilized eggs. The protein is 26S proteasome non-ATPase regulatory subunit 4 of Caenorhabditis elegans.